A 186-amino-acid chain; its full sequence is Elongation factor P (186 aa).

It belongs to the elongation factor P family.

The protein localises to the cytoplasm. Its pathway is protein biosynthesis; polypeptide chain elongation. In terms of biological role, involved in peptide bond synthesis. Stimulates efficient translation and peptide-bond synthesis on native or reconstituted 70S ribosomes in vitro. Probably functions indirectly by altering the affinity of the ribosome for aminoacyl-tRNA, thus increasing their reactivity as acceptors for peptidyl transferase. This chain is Elongation factor P, found in Shewanella woodyi (strain ATCC 51908 / MS32).